The primary structure comprises 285 residues: Type II secretion system protein C (285 aa).

Residues 1-27 lie on the Cytoplasmic side of the membrane; that stretch reads MSKGIKMHNSVMRLTIPNKKIINYAPH. The helical transmembrane segment at 28–46 threads the bilayer; it reads IVTSIILFFICQQLAQLTW. Residues 47 to 285 lie on the Periplasmic side of the membrane; the sequence is KIILPVNFTD…NDIYLALRDE (239 aa).

It belongs to the GSP C family.

It is found in the cell inner membrane. In terms of biological role, involved in a type II secretion system (T2SS, formerly general secretion pathway, GSP) for the export of proteins. Required for the translocation of pullulanase. The chain is Type II secretion system protein C (pulC) from Klebsiella pneumoniae.